We begin with the raw amino-acid sequence, 150 residues long: NADH-quinone oxidoreductase subunit A (150 aa).

3 consecutive transmembrane segments (helical) span residues 14 to 34 (WAFA…LLGA), 70 to 90 (LVAM…AWAV), and 98 to 118 (LGFI…FYLV).

Belongs to the complex I subunit 3 family. As to quaternary structure, NDH-1 is composed of 13 different subunits. Subunits NuoA, H, J, K, L, M, N constitute the membrane sector of the complex.

The protein resides in the cell inner membrane. It catalyses the reaction a quinone + NADH + 5 H(+)(in) = a quinol + NAD(+) + 4 H(+)(out). Its function is as follows. NDH-1 shuttles electrons from NADH, via FMN and iron-sulfur (Fe-S) centers, to quinones in the respiratory chain. The immediate electron acceptor for the enzyme in this species is believed to be ubiquinone. Couples the redox reaction to proton translocation (for every two electrons transferred, four hydrogen ions are translocated across the cytoplasmic membrane), and thus conserves the redox energy in a proton gradient. This is NADH-quinone oxidoreductase subunit A from Proteus mirabilis (strain HI4320).